The sequence spans 390 residues: Glutamyl-tRNA reductase (390 aa).

Substrate is bound by residues 46-49 (TCNR), Ser96, 101-103 (EAQ), and Gln107. The active-site Nucleophile is Cys47. 176–181 (GAGEMA) lines the NADP(+) pocket.

The protein belongs to the glutamyl-tRNA reductase family. In terms of assembly, homodimer.

The enzyme catalyses (S)-4-amino-5-oxopentanoate + tRNA(Glu) + NADP(+) = L-glutamyl-tRNA(Glu) + NADPH + H(+). It functions in the pathway porphyrin-containing compound metabolism; protoporphyrin-IX biosynthesis; 5-aminolevulinate from L-glutamyl-tRNA(Glu): step 1/2. In terms of biological role, catalyzes the NADPH-dependent reduction of glutamyl-tRNA(Glu) to glutamate 1-semialdehyde (GSA). This is Glutamyl-tRNA reductase from Thermus thermophilus (strain ATCC 27634 / DSM 579 / HB8).